The chain runs to 289 residues: Xylosylprotein 4-beta-galactosyltransferase (289 aa).

The Cytoplasmic segment spans residues 1–6 (MKLKTR). Residues 7–27 (LILSGTILISLAACYFLVLLV) form a helical; Signal-anchor for type II membrane protein membrane-spanning segment. At 28–289 (LDLEITRDLM…DLNWTPYCKS (262 aa)) the chain is on the lumenal side. A UDP-alpha-D-galactose-binding site is contributed by 58 to 62 (PYRDR). 2 N-linked (GlcNAc...) asparagine glycosylation sites follow: N81 and N90. UDP-alpha-D-galactose-binding positions include 97 to 99 (FNR), 123 to 124 (VD), Y154, and W184. A Mn(2+)-binding site is contributed by D124. 186–189 (LEDD) contributes to the N-acetyl-D-glucosamine binding site. The N-linked (GlcNAc...) asparagine glycan is linked to N201. The interval 214–236 (NTFRHIHGPKRKRDYTPKKNDKN) is disordered. Over residues 217-226 (RHIHGPKRKR) the composition is skewed to basic residues. H218 serves as a coordination point for Mn(2+). 218-220 (HIH) lines the UDP-alpha-D-galactose pocket. Basic and acidic residues predominate over residues 227 to 236 (DYTPKKNDKN).

This sequence belongs to the glycosyltransferase 7 family. Mn(2+) serves as cofactor.

The protein localises to the membrane. It catalyses the reaction 3-O-(beta-D-xylosyl)-L-seryl-[protein] + UDP-alpha-D-galactose = 3-O-(beta-D-galactosyl-(1-&gt;4)-beta-D-xylosyl)-L-seryl-[protein] + UDP + H(+). Its pathway is protein modification; protein glycosylation. Functionally, glycosyltransferase required for the biosynthesis of the tetrasaccharide (GlcA-Gal-Gal-Xyl-)Ser core linker of heparan sulfate and chondroitin sulfate. Required for embryonic development. Involved in vulval epithelium invagination. Required for axon regeneration after injury. The polypeptide is Xylosylprotein 4-beta-galactosyltransferase (sqv-3) (Caenorhabditis elegans).